A 642-amino-acid chain; its full sequence is G protein-coupled receptor kinase 1 (642 aa).

An N-terminal region spans residues 1–202; that stretch reads MEIENIVANT…LEKRPVDKHT (202 aa). The region spanning 52–188 is the RGS domain; that stretch reads YAFVVEKQPI…AESMYFHRFL (137 aa). The region spanning 203 to 470 is the Protein kinase domain; that stretch reads FRLYRVLGKG…AEEIRAHPFF (268 aa). Residues 209 to 217 and Lys-232 contribute to the ATP site; that span reads LGKGGFGEV. Catalysis depends on Asp-328, which acts as the Proton acceptor. Residues 480–545 enclose the AGC-kinase C-terminal domain; sequence EPVPWKKMEA…GCVSIPWQSE (66 aa). Positions 612–642 are disordered; it reads VEQQQPPKTSTQTPAVRSSRAASASGRTLVI. Low complexity predominate over residues 614-636; it reads QQQPPKTSTQTPAVRSSRAASAS.

This sequence belongs to the protein kinase superfamily. AGC Ser/Thr protein kinase family. GPRK subfamily.

It catalyses the reaction [G-protein-coupled receptor] + ATP = [G-protein-coupled receptor]-phosphate + ADP + H(+). Its function is as follows. Specifically phosphorylates the activated forms of G protein-coupled receptors. The sequence is that of G protein-coupled receptor kinase 1 (grk-1) from Caenorhabditis elegans.